A 154-amino-acid polypeptide reads, in one-letter code: Cindoxin (154 aa).

The Flavodoxin-like domain occupies 3–145; it reads ALILYGTETG…TAEEWAREIL (143 aa). FMN is bound by residues 9 to 13 and 89 to 120; these read TETGN and VFGL…TQVG.

It depends on FMN as a cofactor.

In terms of biological role, involved in the degradation of cineol (eucalyptol). The FMN protein, cindoxin, shuttles electrons between the FAD-containing cindoxin reductase (CinB) and 1,8-cineole 2-endo-monooxygenase (CinA). The sequence is that of Cindoxin (cinC) from Citrobacter braakii.